We begin with the raw amino-acid sequence, 369 residues long: Transposase for insertion sequence element IS1201 (369 aa).

It belongs to the transposase mutator family.

Functionally, required for the transposition of the insertion element. This is Transposase for insertion sequence element IS1201 from Lactobacillus helveticus (Lactobacillus suntoryeus).